A 202-amino-acid chain; its full sequence is ATP-dependent Clp protease proteolytic subunit (202 aa).

The active-site Nucleophile is S101. H126 is an active-site residue.

This sequence belongs to the peptidase S14 family. In terms of assembly, component of the chloroplastic Clp protease core complex.

It localises to the plastid. Its subcellular location is the chloroplast stroma. It catalyses the reaction Hydrolysis of proteins to small peptides in the presence of ATP and magnesium. alpha-casein is the usual test substrate. In the absence of ATP, only oligopeptides shorter than five residues are hydrolyzed (such as succinyl-Leu-Tyr-|-NHMec, and Leu-Tyr-Leu-|-Tyr-Trp, in which cleavage of the -Tyr-|-Leu- and -Tyr-|-Trp bonds also occurs).. In terms of biological role, cleaves peptides in various proteins in a process that requires ATP hydrolysis. Has a chymotrypsin-like activity. Plays a major role in the degradation of misfolded proteins. The chain is ATP-dependent Clp protease proteolytic subunit from Platanus occidentalis (Sycamore).